The chain runs to 606 residues: MNLFTSTLILSLSMLTIPVLMSLSSIYKSTQYPYYVKTIISYAFFTSLIPTLIFINSGHEAILSNWHWMTIQTVKLSLNFKLDYFSMIFTPVALFVTWSIMEFSMWYMHSDPNMNRFFKYLLMFLITMMILVTANNLFQLFIGWEGVGIMSFLLIGWWYGRADANTAALQAILYNRIGDIGFILAMAWFLFNSNSWELQQIFMLDTNQNLLPLLGLLLAATGKSAQFGLHPWLPSAMEGPTPVSALLHSSTMVVAGIFLLIRFYPLIETNKTMQTLILCMGAITTLFTAICALTQNDIKKIIAFSTSSQLGLMMVTIGINQPHLAFLHICTHAFFKAMLFMCSGSIIHNLNDEQDIRKMGGLYNALPFTTTSLIVGSLALTGTPFLTGFYSKDLIIETANTSYTNAWALLMTLIATSLTAVYSTRILYYSVLGQPRHSTLILINENNPLLINSIKRLLIGSIFAGFIISLNITPMTIPQMTMPTHLKLTALIITLTGFILALEISLMTQNLKLSYPHNYHKFSNMLGYFPIIMHRLIPSTTLMMSQKFSSMLLDLTWMENILPKSISNFQASSSIMVSNQKGLIKLYFLSFLITLIITMLLFNFHA.

A run of 16 helical transmembrane segments spans residues L3–L23, Y35–I55, M87–Y107, F117–L137, L140–G160, A171–F191, L211–L233, T241–I261, M273–L293, I301–N320, A325–I347, L366–L386, S402–Y422, L457–I477, L488–T508, and G582–F602.

This sequence belongs to the complex I subunit 5 family. As to quaternary structure, core subunit of respiratory chain NADH dehydrogenase (Complex I) which is composed of 45 different subunits.

The protein localises to the mitochondrion inner membrane. The enzyme catalyses a ubiquinone + NADH + 5 H(+)(in) = a ubiquinol + NAD(+) + 4 H(+)(out). Core subunit of the mitochondrial membrane respiratory chain NADH dehydrogenase (Complex I) which catalyzes electron transfer from NADH through the respiratory chain, using ubiquinone as an electron acceptor. Essential for the catalytic activity and assembly of complex I. In Pseudosoriculus fumidus (Taiwanese brown-toothed shrew), this protein is NADH-ubiquinone oxidoreductase chain 5 (MT-ND5).